Consider the following 125-residue polypeptide: Large ribosomal subunit protein bL12 (125 aa).

This sequence belongs to the bacterial ribosomal protein bL12 family. In terms of assembly, homodimer. Part of the ribosomal stalk of the 50S ribosomal subunit. Forms a multimeric L10(L12)X complex, where L10 forms an elongated spine to which 2 to 4 L12 dimers bind in a sequential fashion. Binds GTP-bound translation factors.

In terms of biological role, forms part of the ribosomal stalk which helps the ribosome interact with GTP-bound translation factors. Is thus essential for accurate translation. This chain is Large ribosomal subunit protein bL12, found in Heliobacterium modesticaldum (strain ATCC 51547 / Ice1).